Here is a 561-residue protein sequence, read N- to C-terminus: MGQGLLQIGLTLCIVIAITPVLGRYIARVFLGERTILDRVMNPIERSVYVISGVRPKDEMTGWQYIRAILYTNLFMGILVYSLIYFQRLLPWNPNGLGVPSWDIVLHTVISFVTNTDQQHYAGETTLSYFSQVAALGFLMFTSAATGLAVGIAFIRGLTGRKLGNFYVDLTRGITRILLPISVIGAIALVLLGVPQTIGETLTITTLEGGTQYIARGPVASFEMIKMLGENGGGFFAANSAHPFENPNGLTNLIETIAMIAIPAAMIYTYGVFAKNIKQAWLLFWMVFIVFVILVWVAAGGELQGNPLVNGTLGIEQPNLEGKEVRFGWAETALWAVMTTATMCGAVNGMHDSLMPQGLFATLFNLFLQIIWGGQGTGTAYLFIYLILTVFLTGLMVGRTPEIFGRKIEKREIVLASLILLIHPIVVLIPSAIALAYPFSLSGISNPSFHGISQVVYEYASASANNGSGLEGLTDNSLWWNLSTSLSILTGRYVPIIAMLLLADSMSRKQTVPQTPGTLKTDSLIFTTVTAGIVLILGVLTFFPVLALGPIAEGFKLASGS.

A run of 12 helical transmembrane segments spans residues 2 to 22 (GQGL…TPVL), 66 to 86 (IRAI…LIYF), 135 to 155 (ALGF…IAFI), 177 to 197 (ILLP…VPQT), 253 to 273 (LIET…YGVF), 280 to 300 (AWLL…VAAG), 327 to 347 (FGWA…CGAV), 354 to 374 (LMPQ…IWGG), 378 to 398 (GTAY…LMVG), 413 to 433 (IVLA…PSAI), 482 to 502 (LSTS…MLLL), and 531 to 551 (AGIV…LGPI).

This sequence belongs to the KdpA family. In terms of assembly, the system is composed of three essential subunits: KdpA, KdpB and KdpC.

The protein localises to the cell inner membrane. Functionally, part of the high-affinity ATP-driven potassium transport (or Kdp) system, which catalyzes the hydrolysis of ATP coupled with the electrogenic transport of potassium into the cytoplasm. This subunit binds the periplasmic potassium ions and delivers the ions to the membrane domain of KdpB through an intramembrane tunnel. This chain is Potassium-transporting ATPase potassium-binding subunit, found in Nostoc sp. (strain PCC 7120 / SAG 25.82 / UTEX 2576).